The primary structure comprises 136 residues: Large ribosomal subunit protein uL16 (136 aa).

Residues 1 to 17 (MLQPKRTKFRKRHKGRN) show a composition bias toward basic residues. The interval 1 to 21 (MLQPKRTKFRKRHKGRNRGLA) is disordered.

This sequence belongs to the universal ribosomal protein uL16 family. Part of the 50S ribosomal subunit.

Its function is as follows. Binds 23S rRNA and is also seen to make contacts with the A and possibly P site tRNAs. In Buchnera aphidicola subsp. Acyrthosiphon kondoi (Acyrthosiphon kondoi symbiotic bacterium), this protein is Large ribosomal subunit protein uL16.